Reading from the N-terminus, the 260-residue chain is MADS-box transcription factor 29 (260 aa).

The MADS-box domain occupies methionine 1–threonine 61. Residues aspartate 85–glutamine 175 form the K-box domain.

In terms of tissue distribution, expressed in developing seeds.

The protein resides in the nucleus. Its function is as follows. Probable transcription factor. In Oryza sativa subsp. japonica (Rice), this protein is MADS-box transcription factor 29 (MADS29).